A 414-amino-acid chain; its full sequence is DNA primase small subunit PriS (414 aa).

Residues aspartate 98, aspartate 100, and aspartate 312 contribute to the active site.

The protein belongs to the eukaryotic-type primase small subunit family. Heterodimer of a small subunit (PriS) and a large subunit (PriL). Mg(2+) is required as a cofactor. Mn(2+) serves as cofactor.

Functionally, catalytic subunit of DNA primase, an RNA polymerase that catalyzes the synthesis of short RNA molecules used as primers for DNA polymerase during DNA replication. The small subunit contains the primase catalytic core and has DNA synthesis activity on its own. Binding to the large subunit stabilizes and modulates the activity, increasing the rate of DNA synthesis while decreasing the length of the DNA fragments, and conferring RNA synthesis capability. The DNA polymerase activity may enable DNA primase to also catalyze primer extension after primer synthesis. May also play a role in DNA repair. The sequence is that of DNA primase small subunit PriS from Methanosarcina acetivorans (strain ATCC 35395 / DSM 2834 / JCM 12185 / C2A).